Reading from the N-terminus, the 279-residue chain is Protein phosphatase 1 regulatory subunit 3E (279 aa).

Phosphoserine occurs at positions 16 and 33. The tract at residues 28–86 is disordered; the sequence is RSQRPSLEEEPEEEPGEGGTRFGARSRAHAPSRGRRARSAPAGGGGARAPRSRSPDTRK. Basic residues predominate over residues 51 to 65; sequence ARSRAHAPSRGRRAR. S66 is subject to Phosphoserine. Positions 87 to 90 match the PP1-binding motif motif; sequence RVRF. Positions 154-259 constitute a CBM21 domain; it reads AARLLTQRIC…NNGGRDYALR (106 aa). A glycogen-binding motif region spans residues 176-198; it reads GSARVVDLAYEKRVSVRWSADGW. The tract at residues 248 to 256 is substrate-binding motif; that stretch reads WDNNGGRDY.

In terms of tissue distribution, expressed in skeletal muscle and heart with barely detectable levels in liver.

Functionally, acts as a glycogen-targeting subunit for PP1. PP1 is involved in glycogen metabolism and contributes to the activation of glycogen synthase leading to an increase in glycogen synthesis. This is Protein phosphatase 1 regulatory subunit 3E (PPP1R3E) from Homo sapiens (Human).